The primary structure comprises 357 residues: Arginine kinase (357 aa).

A2 is subject to N-acetylalanine. The 83-residue stretch at 9–91 (KLEEGFKKLE…FDPIIEDYHK (83 aa)) folds into the Phosphagen kinase N-terminal domain. 64-68 (GVGVY) serves as a coordination point for L-arginine. One can recognise a Phosphagen kinase C-terminal domain in the interval 119–356 (FVISTRVRCG…LELIKIEKEM (238 aa)). ATP contacts are provided by residues 122 to 126 (STRVR) and H185. E225 serves as a coordination point for L-arginine. Position 229 (R229) interacts with ATP. C271 lines the L-arginine pocket. ATP is bound by residues 280–284 (RASVH) and 309–314 (RGTRGE). Residue E314 coordinates L-arginine.

Belongs to the ATP:guanido phosphotransferase family.

It carries out the reaction L-arginine + ATP = N(omega)-phospho-L-arginine + ADP + H(+). The chain is Arginine kinase from Callinectes sapidus (Blue crab).